Reading from the N-terminus, the 238-residue chain is tRNA (guanine-N(7)-)-methyltransferase (238 aa).

The S-adenosyl-L-methionine site is built by glutamate 62, glutamate 87, aspartate 119, and aspartate 141. The active site involves aspartate 141. Substrate is bound by residues lysine 145, aspartate 177, and 216–219 (TRYE).

This sequence belongs to the class I-like SAM-binding methyltransferase superfamily. TrmB family.

The enzyme catalyses guanosine(46) in tRNA + S-adenosyl-L-methionine = N(7)-methylguanosine(46) in tRNA + S-adenosyl-L-homocysteine. It participates in tRNA modification; N(7)-methylguanine-tRNA biosynthesis. Functionally, catalyzes the formation of N(7)-methylguanine at position 46 (m7G46) in tRNA. The protein is tRNA (guanine-N(7)-)-methyltransferase of Novosphingobium aromaticivorans (strain ATCC 700278 / DSM 12444 / CCUG 56034 / CIP 105152 / NBRC 16084 / F199).